Reading from the N-terminus, the 352-residue chain is Ion-translocating oxidoreductase complex subunit D (352 aa).

5 consecutive transmembrane segments (helical) span residues 20–40 (IMLL…WFFG), 42–62 (GTLV…ALVL), 78–109 (ALLT…VIIA), 123–143 (PAMI…TSWL), and 148–168 (IAVN…GHTA). T187 is modified (FMN phosphoryl threonine). 5 helical membrane passes run 214–234 (ILAG…GVWL), 242–262 (WHIP…GWLF), 267–287 (LAAP…FFIL), 301–321 (LIFG…GGYP), and 322–342 (DGVA…DYYT).

It belongs to the NqrB/RnfD family. The complex is composed of six subunits: RsxA, RsxB, RsxC, RsxD, RsxE and RsxG. FMN is required as a cofactor.

The protein localises to the cell inner membrane. In terms of biological role, part of a membrane-bound complex that couples electron transfer with translocation of ions across the membrane. Required to maintain the reduced state of SoxR. The protein is Ion-translocating oxidoreductase complex subunit D of Shigella dysenteriae serotype 1 (strain Sd197).